The following is an 836-amino-acid chain: TATA box-binding protein-associated factor RNA polymerase I subunit C (836 aa).

Disordered regions lie at residues Gly-662–Glu-683 and His-703–Phe-836. The segment covering Asp-738–Arg-754 has biased composition (polar residues). Positions Arg-780–Thr-796 are enriched in basic and acidic residues. At Thr-802 the chain carries Phosphothreonine. Positions Pro-803–Pro-828 are enriched in polar residues.

As to quaternary structure, component of the transcription factor SL1/TIF-IB complex, composed of TBP and at least TAF1A, TAF1B, TAF1C and TAF1D. In the complex interacts directly with TBP, TAF1A and TAF1B. Interaction of the SL1/TIF-IB subunits with TBP excludes interaction of TBP with the transcription factor IID (TFIID) subunits. Interacts with MYC and RRN3. Interacts with p53/TP53; the interaction prevents the association of SL1/TIF-IB with UBTF and represses RNA polymerase I transcription. Part of Pol I pre-initiation complex (PIC), in which Pol I core assembles with RRN3 and promoter-bound UTBF and SL1/TIF-IB complex.

Its subcellular location is the nucleus. It localises to the nucleolus. Component of the transcription factor SL1/TIF-IB complex, which is involved in the assembly of the PIC (pre-initiation complex) during RNA polymerase I-dependent transcription. The rate of PIC formation probably is primarily dependent on the rate of association of SL1/TIF-IB with the rDNA promoter. SL1/TIF-IB is involved in stabilization of nucleolar transcription factor 1/UBTF on rDNA. Formation of SL1/TIF-IB excludes the association of TBP with TFIID subunits. Recruits RNA polymerase I to the rRNA gene promoter via interaction with RRN3. The sequence is that of TATA box-binding protein-associated factor RNA polymerase I subunit C (Taf1c) from Mus musculus (Mouse).